The primary structure comprises 67 residues: DNA-directed RNA polymerase subunit omega (67 aa).

The protein belongs to the RNA polymerase subunit omega family. In terms of assembly, RNAP is composed of a core of 2 alpha, a beta and a beta' subunit. The core is associated with a delta subunit, and at least one of epsilon or omega. When a sigma factor is associated with the core the holoenzyme is formed, which can initiate transcription.

The enzyme catalyses RNA(n) + a ribonucleoside 5'-triphosphate = RNA(n+1) + diphosphate. Its function is as follows. Promotes RNA polymerase assembly. Latches the N- and C-terminal regions of the beta' subunit thereby facilitating its interaction with the beta and alpha subunits. In vitro reconstitution experiments this subunit is dispensible. The protein is DNA-directed RNA polymerase subunit omega (rpoZ) of Bacillus subtilis (strain 168).